We begin with the raw amino-acid sequence, 318 residues long: Ribose-phosphate pyrophosphokinase 1 (318 aa).

Residues Asp-43–Glu-45 and Arg-102–Gln-103 each bind ATP. His-136 and Asp-176 together coordinate Mg(2+). Residue Lys-199 is part of the active site. Residues Arg-201, Asp-225, and Asp-229–Thr-233 contribute to the D-ribose 5-phosphate site.

This sequence belongs to the ribose-phosphate pyrophosphokinase family. Class I subfamily. As to quaternary structure, homohexamer. Mg(2+) serves as cofactor.

It is found in the cytoplasm. It catalyses the reaction D-ribose 5-phosphate + ATP = 5-phospho-alpha-D-ribose 1-diphosphate + AMP + H(+). Its pathway is metabolic intermediate biosynthesis; 5-phospho-alpha-D-ribose 1-diphosphate biosynthesis; 5-phospho-alpha-D-ribose 1-diphosphate from D-ribose 5-phosphate (route I): step 1/1. In terms of biological role, involved in the biosynthesis of the central metabolite phospho-alpha-D-ribosyl-1-pyrophosphate (PRPP) via the transfer of pyrophosphoryl group from ATP to 1-hydroxyl of ribose-5-phosphate (Rib-5-P). This is Ribose-phosphate pyrophosphokinase 1 from Listeria innocua serovar 6a (strain ATCC BAA-680 / CLIP 11262).